A 150-amino-acid chain; its full sequence is Small heat shock protein IbpB (150 aa).

The 112-residue stretch at 26 to 137 folds into the sHSP domain; sequence SQEPIDFPPY…QPQRIAIGGG (112 aa).

The protein belongs to the small heat shock protein (HSP20) family. In terms of assembly, homodimer. Forms homomultimers of about 100-150 subunits at optimal growth temperatures. Conformation changes to oligomers at high temperatures or high ionic concentrations. The decrease in size of the multimers is accompanied by an increase in chaperone activity.

It localises to the cytoplasm. Associates with aggregated proteins, together with IbpA, to stabilize and protect them from irreversible denaturation and extensive proteolysis during heat shock and oxidative stress. Aggregated proteins bound to the IbpAB complex are more efficiently refolded and reactivated by the ATP-dependent chaperone systems ClpB and DnaK/DnaJ/GrpE. Its activity is ATP-independent. This is Small heat shock protein IbpB from Pectobacterium atrosepticum (strain SCRI 1043 / ATCC BAA-672) (Erwinia carotovora subsp. atroseptica).